Reading from the N-terminus, the 321-residue chain is Ribose-phosphate pyrophosphokinase (321 aa).

ATP-binding positions include 44 to 46 (DGE) and 103 to 104 (RQ). The Mg(2+) site is built by His-137 and Asp-179. Lys-202 is a catalytic residue. D-ribose 5-phosphate is bound by residues Arg-204, Asp-228, and 232-236 (DTAGT).

The protein belongs to the ribose-phosphate pyrophosphokinase family. Class I subfamily. Homohexamer. Mg(2+) is required as a cofactor.

The protein resides in the cytoplasm. The catalysed reaction is D-ribose 5-phosphate + ATP = 5-phospho-alpha-D-ribose 1-diphosphate + AMP + H(+). Its pathway is metabolic intermediate biosynthesis; 5-phospho-alpha-D-ribose 1-diphosphate biosynthesis; 5-phospho-alpha-D-ribose 1-diphosphate from D-ribose 5-phosphate (route I): step 1/1. Its function is as follows. Involved in the biosynthesis of the central metabolite phospho-alpha-D-ribosyl-1-pyrophosphate (PRPP) via the transfer of pyrophosphoryl group from ATP to 1-hydroxyl of ribose-5-phosphate (Rib-5-P). This is Ribose-phosphate pyrophosphokinase from Staphylococcus epidermidis (strain ATCC 35984 / DSM 28319 / BCRC 17069 / CCUG 31568 / BM 3577 / RP62A).